The sequence spans 291 residues: 3-methylcatechol 2,3-dioxygenase (291 aa).

VOC domains lie at 5 to 119 (RLGY…IYYG) and 143 to 264 (GLGH…YGWG). 3 residues coordinate Fe cation: His-146, His-210, and Glu-260.

The protein belongs to the extradiol ring-cleavage dioxygenase family. As to quaternary structure, homooctamer. It depends on Fe(2+) as a cofactor.

It catalyses the reaction 3-methylcatechol + O2 = 2-hydroxy-6-oxo-2,4-heptadienoate + H(+). The protein operates within xenobiotic degradation; toluene degradation. In Pseudomonas putida (strain ATCC 700007 / DSM 6899 / JCM 31910 / BCRC 17059 / LMG 24140 / F1), this protein is 3-methylcatechol 2,3-dioxygenase (todE).